The following is a 367-amino-acid chain: GTP cyclohydrolase FolE2 (367 aa).

This sequence belongs to the GTP cyclohydrolase IV family.

The enzyme catalyses GTP + H2O = 7,8-dihydroneopterin 3'-triphosphate + formate + H(+). Its pathway is cofactor biosynthesis; 7,8-dihydroneopterin triphosphate biosynthesis; 7,8-dihydroneopterin triphosphate from GTP: step 1/1. Functionally, converts GTP to 7,8-dihydroneopterin triphosphate. The sequence is that of GTP cyclohydrolase FolE2 from Roseobacter denitrificans (strain ATCC 33942 / OCh 114) (Erythrobacter sp. (strain OCh 114)).